The primary structure comprises 165 residues: Large ribosomal subunit protein uL10 (165 aa).

It belongs to the universal ribosomal protein uL10 family. Part of the ribosomal stalk of the 50S ribosomal subunit. The N-terminus interacts with L11 and the large rRNA to form the base of the stalk. The C-terminus forms an elongated spine to which L12 dimers bind in a sequential fashion forming a multimeric L10(L12)X complex.

Forms part of the ribosomal stalk, playing a central role in the interaction of the ribosome with GTP-bound translation factors. The polypeptide is Large ribosomal subunit protein uL10 (Buchnera aphidicola subsp. Schizaphis graminum (strain Sg)).